The following is a 448-amino-acid chain: Trigger factor (448 aa).

Positions 167–253 (GSIVRVDFVE…LKDIKRRDIP (87 aa)) constitute a PPIase FKBP-type domain.

It belongs to the FKBP-type PPIase family. Tig subfamily.

Its subcellular location is the cytoplasm. It catalyses the reaction [protein]-peptidylproline (omega=180) = [protein]-peptidylproline (omega=0). Involved in protein export. Acts as a chaperone by maintaining the newly synthesized protein in an open conformation. Functions as a peptidyl-prolyl cis-trans isomerase. This chain is Trigger factor, found in Borrelia turicatae (strain 91E135).